The sequence spans 166 residues: Large ribosomal subunit protein uL10 (166 aa).

This sequence belongs to the universal ribosomal protein uL10 family. In terms of assembly, part of the ribosomal stalk of the 50S ribosomal subunit. The N-terminus interacts with L11 and the large rRNA to form the base of the stalk. The C-terminus forms an elongated spine to which L12 dimers bind in a sequential fashion forming a multimeric L10(L12)X complex.

Forms part of the ribosomal stalk, playing a central role in the interaction of the ribosome with GTP-bound translation factors. The chain is Large ribosomal subunit protein uL10 from Streptococcus pneumoniae (strain ATCC 700669 / Spain 23F-1).